Consider the following 274-residue polypeptide: Protein RecA (274 aa).

43–50 (GPESSGKT) serves as a coordination point for ATP.

The protein belongs to the RecA family.

Its subcellular location is the cytoplasm. In terms of biological role, can catalyze the hydrolysis of ATP in the presence of single-stranded DNA, the ATP-dependent uptake of single-stranded DNA by duplex DNA, and the ATP-dependent hybridization of homologous single-stranded DNAs. It interacts with LexA causing its activation and leading to its autocatalytic cleavage. In Neisseria flavescens, this protein is Protein RecA.